Reading from the N-terminus, the 347-residue chain is Dual specificity mitogen-activated protein kinase kinase mek-1 (347 aa).

The segment at 1–42 (MERDFDLGMGRPGGLGGLGGEPIMQQMPQPAPHHPSRSSNDH) is disordered. The span at 10–20 (GRPGGLGGLGG) shows a compositional bias: gly residues. The Protein kinase domain occupies 72–325 (LQFVEDIGHG…YDMLLQHPFV (254 aa)). Residues 78-86 (IGHGSCGTV) and Lys99 each bind ATP. Catalysis depends on Asp193, which acts as the Proton acceptor. Ser221 and Ser225 each carry phosphoserine.

This sequence belongs to the protein kinase superfamily. STE Ser/Thr protein kinase family. MAP kinase kinase subfamily. As to quaternary structure, interacts with shc-1; the interaction is independent of mek-1 catalytic activity, is constitutive and may facilitate mlk-1-mediated phosphorylation by bringing mlk-1 and mek-1 together. Requires Mg(2+) as cofactor. May be phosphorylated at Ser-221 and/or Ser-225 by mlk-1. In terms of tissue distribution, expressed in pharyngeal muscles, uterine endothelial cells, intestine and in neurons of ring ganglia, ventral ganglion and ganglia around anus. Expressed also in hypodermis and body muscles.

It carries out the reaction L-seryl-[protein] + ATP = O-phospho-L-seryl-[protein] + ADP + H(+). The enzyme catalyses L-threonyl-[protein] + ATP = O-phospho-L-threonyl-[protein] + ADP + H(+). The catalysed reaction is L-tyrosyl-[protein] + ATP = O-phospho-L-tyrosyl-[protein] + ADP + H(+). Its activity is regulated as follows. May be activated by phosphorylation at Ser-221 and Ser-225. In terms of biological role, dual specificity protein kinase which may phosphorylate kgb-1 and thereby is an essential component of the JNK pathway composed of mlk-1, mek-1 and kgb-1. May also have a synergistic role with sek-1 in phosphorylating pmk-1. Involved in the response to environmental stress including heavy metal ions (Cu(2+) and Cd(2+)), oxidative stress and starvation. In association with sek-1, regulates germline cell apoptosis in response to oxidative, osmotic and heat shock stresses. Involved in resistance to pathogenic bacteria infection. Involved in axon regeneration after injury. The chain is Dual specificity mitogen-activated protein kinase kinase mek-1 from Caenorhabditis elegans.